The primary structure comprises 786 residues: Receptor-interacting serine/threonine-protein kinase 4 (786 aa).

Positions 22-286 (FAGWEKVGSG…QEITSETEDL (265 aa)) constitute a Protein kinase domain. Residues 28–36 (VGSGGFGQV) and Lys-51 contribute to the ATP site. Residue Lys-51 forms a Glycyl lysine isopeptide (Lys-Gly) (interchain with G-Cter in ubiquitin) linkage. Catalysis depends on Asp-143, which acts as the Proton acceptor. Lys-145 participates in a covalent cross-link: Glycyl lysine isopeptide (Lys-Gly) (interchain with G-Cter in ubiquitin). 2 disordered regions span residues 293–328 (EVKDLAHEPGEKSSLESKSEARPESSRLKRASAPPF) and 347–378 (QTLEGPEELSRSSSECKLPSSSSGKRLSGVSS). Residues 295–319 (KDLAHEPGEKSSLESKSEARPESSR) show a composition bias toward basic and acidic residues. The span at 357–378 (RSSSECKLPSSSSGKRLSGVSS) shows a compositional bias: low complexity. ANK repeat units lie at residues 439-468 (SSASLLHLAVEAGQEECVKWLLLNNANPNL), 472-501 (KGSTPLHMAVERKGRGIVELLLARKTSVNA), 505-534 (DQWTALHFAAQNGDEASTRLLLEKNASVNE), 538-567 (EGRTPMHVACQHGQENIVRTLLRRGVDVGL), 571-601 (DAWLPLHYAAWQGHLPIVKLLAKQPGVSVNA), 605-634 (DGRTPLHLAAQRGHYRVARILIDLCSDVNI), 638-667 (QAQTPLHVAAETGHTSTARLLLHRGAGKEA), 671-700 (EGYTALHLAAQNGHLATVKLLIEEKADVMA), 704-734 (LNQTALHLAAARGHSEVVEELVSADLIDLSD), and 736-765 (QGLSALHLAAQGRHSQTVETLLKHGAHINL).

This sequence belongs to the protein kinase superfamily. TKL Ser/Thr protein kinase family. In terms of assembly, interacts with PRKCB. Interacts with TRAF1, TRAF2, TRAF3 and TRAF5. Interacts with BIRC2/c-IAP1, BIRC3/c-IAP2 and XIAP/BIRC4. Post-translationally, may be phosphorylated by MAP3K2 and MAP3K3. Proteolytically cleaved by during Fas-induced apoptosis. Cleavage at Asp-342 and Asp-380. In terms of processing, polyubiquitinated with 'Lys-48' and 'Lys-63'-linked chains by BIRC2/c-IAP1 and BIRC3/c-IAP2, leading to activation of NF-kappa-B. As to expression, expressed in the epidermis of the skin (at protein level). Ubiquitously expressed, with an abundant expression in the thymus, bone marrow, pro-B, pre-B and immature B cells and a weak expression in the spleen.

The protein resides in the cytoplasm. The protein localises to the membrane. The catalysed reaction is L-seryl-[protein] + ATP = O-phospho-L-seryl-[protein] + ADP + H(+). The enzyme catalyses L-threonyl-[protein] + ATP = O-phospho-L-threonyl-[protein] + ADP + H(+). Functionally, serine/threonine protein kinase. Required for embryonic skin development and correct skin homeostasis in adults, via phosphorylation of PKP1 and subsequent promotion of keratinocyte differentiation and cell adhesion. It is a direct transcriptional target of TP63. Plays a role in NF-kappa-B activation. In Mus musculus (Mouse), this protein is Receptor-interacting serine/threonine-protein kinase 4 (Ripk4).